The following is a 139-amino-acid chain: Small ribosomal subunit protein uS12 (139 aa).

Residues 1-44 are disordered; that stretch reads MPTINQLVRKPRQSKITKSKSPALNKGYNSFKKSLTDVKSPQKR. Residues 9–18 show a composition bias toward basic residues; sequence RKPRQSKITK. The segment covering 19-39 has biased composition (polar residues); the sequence is SKSPALNKGYNSFKKSLTDVK. Aspartate 102 carries the 3-methylthioaspartic acid modification.

It belongs to the universal ribosomal protein uS12 family. In terms of assembly, part of the 30S ribosomal subunit. Contacts proteins S8 and S17. May interact with IF1 in the 30S initiation complex.

With S4 and S5 plays an important role in translational accuracy. Functionally, interacts with and stabilizes bases of the 16S rRNA that are involved in tRNA selection in the A site and with the mRNA backbone. Located at the interface of the 30S and 50S subunits, it traverses the body of the 30S subunit contacting proteins on the other side and probably holding the rRNA structure together. The combined cluster of proteins S8, S12 and S17 appears to hold together the shoulder and platform of the 30S subunit. This chain is Small ribosomal subunit protein uS12, found in Lysinibacillus sphaericus (strain C3-41).